A 500-amino-acid polypeptide reads, in one-letter code: Probable trehalose-phosphate phosphatase 8 (500 aa).

It belongs to the trehalose phosphatase family. A divalent metal cation is required as a cofactor.

It carries out the reaction alpha,alpha-trehalose 6-phosphate + H2O = alpha,alpha-trehalose + phosphate. It functions in the pathway glycan biosynthesis; trehalose biosynthesis. Removes the phosphate from trehalose 6-phosphate to produce free trehalose. Trehalose accumulation in plant may improve abiotic stress tolerance. The sequence is that of Probable trehalose-phosphate phosphatase 8 (TPP8) from Oryza sativa subsp. japonica (Rice).